Consider the following 393-residue polypeptide: NAD(P)H-quinone oxidoreductase subunit H, chloroplastic (393 aa).

It belongs to the complex I 49 kDa subunit family. NDH is composed of at least 16 different subunits, 5 of which are encoded in the nucleus.

The protein localises to the plastid. Its subcellular location is the chloroplast thylakoid membrane. It carries out the reaction a plastoquinone + NADH + (n+1) H(+)(in) = a plastoquinol + NAD(+) + n H(+)(out). The enzyme catalyses a plastoquinone + NADPH + (n+1) H(+)(in) = a plastoquinol + NADP(+) + n H(+)(out). Functionally, NDH shuttles electrons from NAD(P)H:plastoquinone, via FMN and iron-sulfur (Fe-S) centers, to quinones in the photosynthetic chain and possibly in a chloroplast respiratory chain. The immediate electron acceptor for the enzyme in this species is believed to be plastoquinone. Couples the redox reaction to proton translocation, and thus conserves the redox energy in a proton gradient. This is NAD(P)H-quinone oxidoreductase subunit H, chloroplastic from Helianthus annuus (Common sunflower).